The following is a 236-amino-acid chain: Cyclin-P3-1 (236 aa).

Belongs to the cyclin family. Cyclin U/P subfamily.

This Oryza sativa subsp. japonica (Rice) protein is Cyclin-P3-1 (CYCP3-1).